A 301-amino-acid polypeptide reads, in one-letter code: Rhodopsin (301 aa).

The Extracellular portion of the chain corresponds to 1–18; sequence LHMIHLHWYQYPPMNPMM. The chain crosses the membrane as a helical span at residues 19-43; it reads YPLLLIFMLFTGILCLAGNFVTIWV. Topologically, residues 44-55 are cytoplasmic; sequence FMNTKSLRTPAN. The helical transmembrane segment at 56–78 threads the bilayer; that stretch reads LLVVNLAMSDFLMMFTMFPPMMV. The Extracellular segment spans residues 79-92; it reads TCYYHTWTLGPTFC. A disulfide bond links Cys92 and Cys169. Residues 93-115 traverse the membrane as a helical segment; sequence QVYAFLGNLCGCASIWTMVFITF. Positions 116–118 match the 'Ionic lock' involved in activated form stabilization motif; that stretch reads DRY. Over 116-134 the chain is Cytoplasmic; it reads DRYNVIVKGVAGEPLSNKK. Residues 135-155 traverse the membrane as a helical segment; that stretch reads AAMWILSVWVLSTAWCMAPFF. At 156–182 the chain is on the extracellular side; sequence GWNSYVPEGNLTGCGTDYLSEDILSRS. N-linked (GlcNAc...) asparagine glycosylation occurs at Asn165. The helical transmembrane segment at 183-204 threads the bilayer; the sequence is YLYIYSTWVYFLPLTITIYCYV. Residues 205–245 are Cytoplasmic-facing; it reads FIIKAVAAHEKGMRDQAKKMGIKSLRNEEAQKTSAECRLAK. A helical membrane pass occupies residues 246–267; sequence IAMTTVALWFIAWTPYLLINWV. Residues 268 to 278 are Extracellular-facing; that stretch reads GMFARSYLSPV. The chain crosses the membrane as a helical span at residues 279 to 300; sequence YTIWGYVFAKANAVYNPIVYAI. Position 288 is an N6-(retinylidene)lysine (Lys288).

Belongs to the G-protein coupled receptor 1 family. Opsin subfamily. As to quaternary structure, homodimer. Interacts with GNAQ. Contains one covalently linked retinal chromophore.

It is found in the cell projection. It localises to the rhabdomere membrane. Functionally, photoreceptor required for image-forming vision at low light intensity. Can use both retinal and 3-dehydroretinal as visual pigment. Light-induced isomerization of 11-cis to all-trans retinal triggers a conformational change that activates signaling via G-proteins. Signaling via GNAQ probably mediates the activation of phospholipase C. This Faxonius virilis (Virile crayfish) protein is Rhodopsin (RHO).